A 136-amino-acid chain; its full sequence is MTLKLCVLTPNRIFWDSEVEEIILSTNSGQIGILPTHTPIATSVDIGILRIRLNGRWLTMALMGGFARIGNNEITVLVNDAERSSDIDPQEAQQTVEIAEANFRKAKGKRQKIEANIALCRARTRVKAVSPISVGK.

This sequence belongs to the ATPase epsilon chain family. F-type ATPases have 2 components, CF(1) - the catalytic core - and CF(0) - the membrane proton channel. CF(1) has five subunits: alpha(3), beta(3), gamma(1), delta(1), epsilon(1). CF(0) has three main subunits: a, b and c.

The protein resides in the plastid thylakoid membrane. Its function is as follows. Produces ATP from ADP in the presence of a proton gradient across the membrane. The polypeptide is ATP synthase epsilon chain, plastid (Cuscuta reflexa (Southern Asian dodder)).